Here is a 375-residue protein sequence, read N- to C-terminus: Alcohol dehydrogenase 1 (375 aa).

Ser2 is subject to N-acetylserine. Residues Cys47, His68, Cys98, Cys101, Cys104, Cys112, and Cys175 each coordinate Zn(2+). NAD(+) contacts are provided by residues 200-205, Asp224, and Lys229; that span reads GLGGVG. The residue at position 234 (Lys234) is an N6-succinyllysine. NAD(+) is bound at residue 293 to 295; sequence VGV. Lys340 is subject to N6-succinyllysine. Arg370 provides a ligand contact to NAD(+).

It belongs to the zinc-containing alcohol dehydrogenase family. Class-I subfamily. In terms of assembly, dimer of identical or non-identical chains of three types (A, B, C), which are coded by 3 separate genes at different loci. Zn(2+) is required as a cofactor. Expressed at high levels in the liver, small intestine and eye, at moderate levels in kidney, ovary and uterus, and at low levels in the spinal cord, thymus, heart, stomach mucosa, skin and testis.

Its subcellular location is the cytoplasm. The catalysed reaction is a primary alcohol + NAD(+) = an aldehyde + NADH + H(+). It carries out the reaction a secondary alcohol + NAD(+) = a ketone + NADH + H(+). In Mus musculus (Mouse), this protein is Alcohol dehydrogenase 1 (Adh1).